Consider the following 242-residue polypeptide: Biosynthetic peptidoglycan transglycosylase (242 aa).

The chain crosses the membrane as a helical span at residues 19–39 (LMVVLAVFWGGGIALFSVAPV).

The protein belongs to the glycosyltransferase 51 family.

The protein resides in the cell inner membrane. It carries out the reaction [GlcNAc-(1-&gt;4)-Mur2Ac(oyl-L-Ala-gamma-D-Glu-L-Lys-D-Ala-D-Ala)](n)-di-trans,octa-cis-undecaprenyl diphosphate + beta-D-GlcNAc-(1-&gt;4)-Mur2Ac(oyl-L-Ala-gamma-D-Glu-L-Lys-D-Ala-D-Ala)-di-trans,octa-cis-undecaprenyl diphosphate = [GlcNAc-(1-&gt;4)-Mur2Ac(oyl-L-Ala-gamma-D-Glu-L-Lys-D-Ala-D-Ala)](n+1)-di-trans,octa-cis-undecaprenyl diphosphate + di-trans,octa-cis-undecaprenyl diphosphate + H(+). It participates in cell wall biogenesis; peptidoglycan biosynthesis. Its function is as follows. Peptidoglycan polymerase that catalyzes glycan chain elongation from lipid-linked precursors. This chain is Biosynthetic peptidoglycan transglycosylase, found in Escherichia coli (strain SMS-3-5 / SECEC).